The following is a 351-amino-acid chain: Protein arginine N-methyltransferase 1 (351 aa).

The SAM-dependent MTase PRMT-type domain occupies 30–331 (KDYYFDSYAH…KNNRDLDFTV (302 aa)). S-adenosyl-L-methionine-binding residues include histidine 43, arginine 52, glycine 76, glutamate 98, and glutamate 127. Catalysis depends on residues glutamate 142 and glutamate 151.

Belongs to the class I-like SAM-binding methyltransferase superfamily. Protein arginine N-methyltransferase family. Homodimer. Homooctamer; individual homodimers associates to form a homooctamer and homooligomerization is required for proper localization to the cell membrane. Individual homodimers can associate to form a homohexamer. Component of a complex with lsm14a/rap55a. Interacts with cirbp.

It localises to the nucleus. Its subcellular location is the nucleoplasm. The protein resides in the cytoplasm. The protein localises to the cytosol. It carries out the reaction L-arginyl-[protein] + 2 S-adenosyl-L-methionine = N(omega),N(omega)-dimethyl-L-arginyl-[protein] + 2 S-adenosyl-L-homocysteine + 2 H(+). It catalyses the reaction L-arginyl-[protein] + S-adenosyl-L-methionine = N(omega)-methyl-L-arginyl-[protein] + S-adenosyl-L-homocysteine + H(+). The enzyme catalyses N(omega)-methyl-L-arginyl-[protein] + S-adenosyl-L-methionine = N(omega),N(omega)-dimethyl-L-arginyl-[protein] + S-adenosyl-L-homocysteine + H(+). Arginine methyltransferase that methylates (mono and asymmetric dimethylation) the guanidino nitrogens of arginyl residues present in target proteins. Constitutes the main enzyme that mediates monomethylation and asymmetric dimethylation of histone H4 'Arg-3' (H4R3me1 and H4R3me2a, respectively), a specific tag for epigenetic transcriptional activation. Methylates ilf3 to regulate its DNA-binding activity. Required for neural induction, playing a key role in the control of epidermal versus neural cell fate choice. Methylates cirbp to regulate its subcellular location. Acts transiently during metamorphosis as a transcription coactivator, enhancing thyroid hormone (T3) receptor (TR)-mediated transcription by enhancing TR binding to the T3 response element (TRE), and histone modification through recruitment of other coactivators. The polypeptide is Protein arginine N-methyltransferase 1 (Xenopus tropicalis (Western clawed frog)).